A 372-amino-acid polypeptide reads, in one-letter code: tRNA-specific 2-thiouridylase MnmA (372 aa).

Residues 16-23 and Met42 contribute to the ATP site; that span reads GMSGGVDS. An interaction with target base in tRNA region spans residues 102–104; sequence NPD. The Nucleophile role is filled by Cys107. Cys107 and Cys205 are disulfide-bonded. Gly132 is a binding site for ATP. The segment at 155–157 is interaction with tRNA; the sequence is KDQ. Cys205 functions as the Cysteine persulfide intermediate in the catalytic mechanism. An interaction with tRNA region spans residues 317–318; the sequence is RY.

It belongs to the MnmA/TRMU family.

The protein localises to the cytoplasm. It carries out the reaction S-sulfanyl-L-cysteinyl-[protein] + uridine(34) in tRNA + AH2 + ATP = 2-thiouridine(34) in tRNA + L-cysteinyl-[protein] + A + AMP + diphosphate + H(+). Its function is as follows. Catalyzes the 2-thiolation of uridine at the wobble position (U34) of tRNA, leading to the formation of s(2)U34. The chain is tRNA-specific 2-thiouridylase MnmA from Shewanella putrefaciens (strain CN-32 / ATCC BAA-453).